The sequence spans 429 residues: Cleavage stimulation factor subunit 50 (429 aa).

A hydrophobic region spans residues 20–41; the sequence is LNALIVAHLRHHNLSQVASAVA. WD repeat units lie at residues 121–160, 174–213, 218–257, 264–303, 308–347, 351–392, and 396–429; these read EHKSVVRCARFSPDGMFFATGGADTSIKLFEVPKVKQMIS, DHAEPINDLDFHPRSTILISSAKDNCIKFFDFSKTTAKRA, QDTHNVRSISFHPSGEFLLAGTDHPIPHLYDVNTYQCFLP, GVSGAINQVRYSSTGSIYITASKDGAIRLFDGVSAKCVRS, HGKSEVTSAVFTKDQRFVLSSGKDSTVKLWEIGSGRMVKE, AKRV…KVAK, and NHNGAPRWIEHSPVESVFVTCGIDRSIRFWKESV.

In terms of assembly, homodimer. Belongs to the CSTF complex. Forms a complex with cleavage and polyadenylation specificity factor (CPSF) subunits CSTF64, PABN3, CPSF30, FIPS5 and CPSF100.

The protein localises to the nucleus. Functionally, one of the multiple factors required for polyadenylation and 3'-end cleavage of pre-mRNAs. May be responsible for the interaction of CSTF with other factors to form a stable complex on the pre-mRNA. The chain is Cleavage stimulation factor subunit 50 from Arabidopsis thaliana (Mouse-ear cress).